The following is a 585-amino-acid chain: Arginine--tRNA ligase (585 aa).

The 'HIGH' region signature appears at 131–141 (ANPTGPMHVGH).

It belongs to the class-I aminoacyl-tRNA synthetase family. As to quaternary structure, monomer.

It is found in the cytoplasm. The enzyme catalyses tRNA(Arg) + L-arginine + ATP = L-arginyl-tRNA(Arg) + AMP + diphosphate. The polypeptide is Arginine--tRNA ligase (Brucella abortus (strain S19)).